The sequence spans 397 residues: GPI mannosyltransferase 1 (397 aa).

A run of 9 helical transmembrane segments spans residues 5–25 (ECLL…YGIY), 79–99 (WVHF…VMVM), 111–128 (LILA…TVST), 156–176 (GFVY…ALPI), 193–213 (LTMG…MYYI), 257–277 (WAEF…YVLW), 307–327 (YFIW…LSGA), 330–350 (IFLI…GYLL), and 362–382 (LFSA…QFIL).

Belongs to the PIGM family.

The protein resides in the endoplasmic reticulum membrane. It participates in glycolipid biosynthesis; glycosylphosphatidylinositol-anchor biosynthesis. In terms of biological role, mannosyltransferase involved in glycosylphosphatidylinositol-anchor biosynthesis. Transfers the first alpha-1,4-mannose to GlcN-acyl-PI during GPI precursor assembly. Required for cell wall integrity. The chain is GPI mannosyltransferase 1 (GPI14) from Eremothecium gossypii (strain ATCC 10895 / CBS 109.51 / FGSC 9923 / NRRL Y-1056) (Yeast).